A 242-amino-acid polypeptide reads, in one-letter code: Probable transcriptional regulatory protein NGO_1291 (242 aa).

Belongs to the TACO1 family.

The protein resides in the cytoplasm. The sequence is that of Probable transcriptional regulatory protein NGO_1291 from Neisseria gonorrhoeae (strain ATCC 700825 / FA 1090).